Consider the following 552-residue polypeptide: Iduronate 2-sulfatase (552 aa).

Positions 1–29 (MSPPPPPPIWRQLSFSLLLGSFCIALESA) are cleaved as a signal peptide. A propeptide spanning residues 30–35 (AQGNSA) is cleaved from the precursor. Residues D47, D48, and C86 each contribute to the Ca(2+) site. C86 serves as the catalytic Nucleophile. 3-oxoalanine (Cys) is present on C86. N-linked (GlcNAc...) asparagine glycosylation is present at N117. Residue H140 is part of the active site. The N-linked (GlcNAc...) asparagine glycan is linked to N146. The cysteines at positions 173 and 186 are disulfide-linked. N248 and N282 each carry an N-linked (GlcNAc...) asparagine glycan. The Ca(2+) site is built by D336 and H337. Residues C424 and C434 are joined by a disulfide bond. N-linked (GlcNAc...) asparagine glycans are attached at residues N515 and N539.

The protein belongs to the sulfatase family. As to quaternary structure, monomer. The 58-kDa mature form is composed of two chains resulting from proteolitic processing, the 42-kDa chain and the 14-kDa chain that remain stably associated and form the 58-kDa intermediate form which is enzymatically active. Requires Ca(2+) as cofactor. Post-translationally, synthesized as a 75-kDa precursor form in the endoplasmic reticulum (ER), and then processed by proteolytic cleavage through various intermediates to yield a 55-kDa mature form, with the release of an 18 kDa polypeptide. The conversion to 3-oxoalanine (also known as C-formylglycine, FGly), of a serine or cysteine residue in prokaryotes and of a cysteine residue in eukaryotes, is critical for catalytic activity. Found to be expressed in alpha and beta pancreatic cells.

It localises to the lysosome. It carries out the reaction Hydrolysis of the 2-sulfate groups of the L-iduronate 2-sulfate units of dermatan sulfate, heparan sulfate and heparin.. Lysosomal enzyme involved in the degradation pathway of dermatan sulfate and heparan sulfate. The sequence is that of Iduronate 2-sulfatase (Ids) from Mus musculus (Mouse).